A 443-amino-acid polypeptide reads, in one-letter code: Phosphoglucosamine mutase (443 aa).

Serine 102 functions as the Phosphoserine intermediate in the catalytic mechanism. Serine 102, aspartate 241, aspartate 243, and aspartate 245 together coordinate Mg(2+). Serine 102 is modified (phosphoserine).

The protein belongs to the phosphohexose mutase family. It depends on Mg(2+) as a cofactor. In terms of processing, activated by phosphorylation.

It catalyses the reaction alpha-D-glucosamine 1-phosphate = D-glucosamine 6-phosphate. Functionally, catalyzes the conversion of glucosamine-6-phosphate to glucosamine-1-phosphate. The protein is Phosphoglucosamine mutase of Polaromonas sp. (strain JS666 / ATCC BAA-500).